A 200-amino-acid chain; its full sequence is Thymidine kinase (200 aa).

ATP is bound by residues G15–S22 and D88–Q91. E89 (proton acceptor) is an active-site residue. Residues C145, C148, C177, and C180 each coordinate Zn(2+).

The protein belongs to the thymidine kinase family. As to quaternary structure, homotetramer.

It is found in the cytoplasm. The enzyme catalyses thymidine + ATP = dTMP + ADP + H(+). The protein is Thymidine kinase of Mycoplasma mobile (strain ATCC 43663 / 163K / NCTC 11711) (Mesomycoplasma mobile).